The chain runs to 1451 residues: Glutamate receptor ionotropic, NMDA 2A (1451 aa).

The signal sequence occupies residues 1–20 (MGMFVLLLYTFLYAGDLGHG). The Extracellular segment spans residues 21–547 (AEKSFPVLNI…PSAFLEPFSA (527 aa)). N67 carries an N-linked (GlcNAc...) asparagine glycan. C79 and C312 are oxidised to a cystine. Zn(2+) contacts are provided by H120, D258, and D274. 4 N-linked (GlcNAc...) asparagine glycosylation sites follow: N332, N372, N435, and N436. Disulfide bonds link C421–C447 and C428–C448. S503, T505, and R510 together coordinate L-glutamate. The N-linked (GlcNAc...) asparagine glycan is linked to N533. The chain crosses the membrane as a helical span at residues 548–568 (SVWVMMFVMLLLVSAMAVFIF). The Cytoplasmic segment spans residues 569–592 (EYFSPVGYNRNLAQGKDPHGPSFT). Residues 591–612 (FTIGKAVWLLWGLVFNNSVPVQ) form a pore-forming region. The discontinuously helical intramembrane region spans 593-612 (IGKAVWLLWGLVFNNSVPVQ). Residues 613–617 (NPKGT) lie on the Cytoplasmic side of the membrane. Residues 618 to 637 (TSKIIVSIWAFFAVIFLASY) traverse the membrane as a helical segment. At 638–808 (TANLAAFMIQ…VMSSQLDIDN (171 aa)) the chain is on the extracellular side. N679 is a glycosylation site (N-linked (GlcNAc...) asparagine). Residues S681, T682, and D723 each contribute to the L-glutamate site. C737 and C792 are disulfide-bonded. Residues 809–829 (MAGVFYMLAAAMALSLITFVW) form a helical membrane-spanning segment. Residues 830–1451 (EHLFYWKLRF…KKMPSLESDV (622 aa)) lie on the Cytoplasmic side of the membrane. Positions 1011–1022 (TLRQTQGSVNEN) are enriched in polar residues. Disordered regions lie at residues 1011–1080 (TLRQ…VSAK) and 1100–1165 (NRDK…GRLP). Composition is skewed to basic and acidic residues over residues 1055 to 1073 (CHID…DNLK), 1100 to 1113 (NRDK…DKEP), and 1138 to 1149 (YQDHNDNYRKTE).

This sequence belongs to the glutamate-gated ion channel (TC 1.A.10.1) family. Heterotetramer. Forms heterotetrameric channels composed of two GluN1/zeta subunits (GRIN1), and two identical GluN2/epsilon subunits (GRIN2A, GRIN2B, GRIN2C or GRIN2D) or GluN3 subunits (GRIN3A or GRIN3B) (in vitro). In vivo, the subunit composition may depend on the expression levels of the different subunits.

It localises to the cell membrane. Its subcellular location is the postsynaptic cell membrane. It catalyses the reaction Ca(2+)(in) = Ca(2+)(out). It carries out the reaction Na(+)(in) = Na(+)(out). The enzyme catalyses K(+)(in) = K(+)(out). Its function is as follows. Component of N-methyl-D-aspartate (NMDA) receptors (NMDARs) that function as heterotetrameric, ligand-gated cation channels with high calcium permeability and voltage-dependent block by Mg(2+). MDARs participate in synaptic plasticity. Channel activation requires binding of the neurotransmitter L-glutamate to the GluN2 subunit, glycine binding to the GluN1 subunit, plus membrane depolarization to eliminate channel inhibition by Mg(2+). NMDARs mediate simultaneously the potasium efflux and the influx of calcium and sodium. Each GluN2 subunit confers differential attributes to channel properties, including activation, deactivation and desensitization kinetics, pH sensitivity, Ca2(+) permeability, and binding to allosteric modulators. Plays a role in dendritic branching in brain neurons and in synaptic plasticity. This Xenopus laevis (African clawed frog) protein is Glutamate receptor ionotropic, NMDA 2A.